A 172-amino-acid polypeptide reads, in one-letter code: Ribosome maturation factor RimM (172 aa).

Residues 96 to 168 (EGEFYYHEII…RVDVEIPEGL (73 aa)) enclose the PRC barrel domain.

Belongs to the RimM family. As to quaternary structure, binds ribosomal protein uS19.

It is found in the cytoplasm. Functionally, an accessory protein needed during the final step in the assembly of 30S ribosomal subunit, possibly for assembly of the head region. Essential for efficient processing of 16S rRNA. May be needed both before and after RbfA during the maturation of 16S rRNA. It has affinity for free ribosomal 30S subunits but not for 70S ribosomes. The protein is Ribosome maturation factor RimM of Streptococcus gordonii (strain Challis / ATCC 35105 / BCRC 15272 / CH1 / DL1 / V288).